Reading from the N-terminus, the 56-residue chain is MAKKTAVELIALQCSECKRRNYTTSKNRKNIQGKLELMKYCSFDRKHTLHKETKIK.

Belongs to the bacterial ribosomal protein bL33 family.

In Treponema denticola (strain ATCC 35405 / DSM 14222 / CIP 103919 / JCM 8153 / KCTC 15104), this protein is Large ribosomal subunit protein bL33.